The sequence spans 320 residues: ATP-dependent 6-phosphofructokinase (320 aa).

An ATP-binding site is contributed by Gly-12. ADP contacts are provided by residues 22–26 (RGVVR) and 55–60 (RYSVSD). ATP contacts are provided by residues 73-74 (RF) and 103-106 (GDGS). Mg(2+) is bound at residue Asp-104. Residue 126-128 (TID) participates in substrate binding. Asp-128 (proton acceptor) is an active-site residue. Residue Arg-155 participates in ADP binding. Residues Arg-163 and 170 to 172 (MGR) each bind substrate. Residues 186 to 188 (GCE), Lys-212, and 214 to 216 (KKH) contribute to the ADP site. Substrate-binding positions include Glu-223, Arg-244, and 250-253 (HIQR).

It belongs to the phosphofructokinase type A (PFKA) family. ATP-dependent PFK group I subfamily. Prokaryotic clade 'B1' sub-subfamily. As to quaternary structure, homotetramer. Mg(2+) serves as cofactor.

It localises to the cytoplasm. The enzyme catalyses beta-D-fructose 6-phosphate + ATP = beta-D-fructose 1,6-bisphosphate + ADP + H(+). It functions in the pathway carbohydrate degradation; glycolysis; D-glyceraldehyde 3-phosphate and glycerone phosphate from D-glucose: step 3/4. With respect to regulation, allosterically activated by ADP and other diphosphonucleosides, and allosterically inhibited by phosphoenolpyruvate. In terms of biological role, catalyzes the phosphorylation of D-fructose 6-phosphate to fructose 1,6-bisphosphate by ATP, the first committing step of glycolysis. This Salmonella gallinarum (strain 287/91 / NCTC 13346) protein is ATP-dependent 6-phosphofructokinase.